An 802-amino-acid chain; its full sequence is Protein SBE22 (802 aa).

Disordered regions lie at residues 207–230 and 323–345; these read SSTI…RSNS and SGDP…QRHN.

Belongs to the SBE2 family.

Its subcellular location is the cytoplasm. It is found in the golgi apparatus. Its function is as follows. With SBE2, is involved in cell wall integrity and polarity processes like bud growth. This Vanderwaltozyma polyspora (strain ATCC 22028 / DSM 70294 / BCRC 21397 / CBS 2163 / NBRC 10782 / NRRL Y-8283 / UCD 57-17) (Kluyveromyces polysporus) protein is Protein SBE22 (SBE22).